We begin with the raw amino-acid sequence, 340 residues long: NADPH dehydrogenase (340 aa).

23–26 (SPMC) contacts FMN. Residue Tyr28 coordinates substrate. FMN is bound by residues Ala60 and Gln102. Residue 164-167 (HAAH) coordinates substrate. FMN-binding positions include Arg215 and 307–308 (GR).

The protein belongs to the NADH:flavin oxidoreductase/NADH oxidase family. NamA subfamily. As to quaternary structure, homotetramer. FMN is required as a cofactor.

The enzyme catalyses A + NADPH + H(+) = AH2 + NADP(+). Its function is as follows. Catalyzes the reduction of the double bond of an array of alpha,beta-unsaturated aldehydes and ketones. It also reduces the nitro group of nitroester and nitroaromatic compounds. It could have a role in detoxification processes. In Geobacillus thermodenitrificans (strain NG80-2), this protein is NADPH dehydrogenase.